A 334-amino-acid chain; its full sequence is Anthranilate phosphoribosyltransferase (334 aa).

Residues G81, 84 to 85 (GD), T89, 91 to 94 (NIST), 109 to 117 (KHGNRSVSS), and A121 each bind 5-phospho-alpha-D-ribose 1-diphosphate. G81 is an anthranilate binding site. S93 is a binding site for Mg(2+). N112 is an anthranilate binding site. R167 contacts anthranilate. Mg(2+) contacts are provided by D225 and E226.

It belongs to the anthranilate phosphoribosyltransferase family. Homodimer. The cofactor is Mg(2+).

The enzyme catalyses N-(5-phospho-beta-D-ribosyl)anthranilate + diphosphate = 5-phospho-alpha-D-ribose 1-diphosphate + anthranilate. It participates in amino-acid biosynthesis; L-tryptophan biosynthesis; L-tryptophan from chorismate: step 2/5. Its function is as follows. Catalyzes the transfer of the phosphoribosyl group of 5-phosphorylribose-1-pyrophosphate (PRPP) to anthranilate to yield N-(5'-phosphoribosyl)-anthranilate (PRA). The chain is Anthranilate phosphoribosyltransferase from Histophilus somni (strain 2336) (Haemophilus somnus).